Here is a 255-residue protein sequence, read N- to C-terminus: Putative enoyl-CoA hydratase/isomerase YhaR (255 aa).

2 helical membrane passes run 96 to 116 (VTIA…ALCA) and 126 to 146 (VLAM…HYLL).

Belongs to the enoyl-CoA hydratase/isomerase family.

The protein localises to the cell membrane. This chain is Putative enoyl-CoA hydratase/isomerase YhaR (yhaR), found in Bacillus subtilis (strain 168).